The primary structure comprises 242 residues: Large ribosomal subunit protein uL30x (242 aa).

This sequence belongs to the universal ribosomal protein uL30 family.

The sequence is that of Large ribosomal subunit protein uL30x (RPL7C) from Arabidopsis thaliana (Mouse-ear cress).